The following is a 279-amino-acid chain: Tryptophan synthase alpha chain (279 aa).

Active-site proton acceptor residues include Glu-50 and Asp-61.

It belongs to the TrpA family. As to quaternary structure, tetramer of two alpha and two beta chains.

It catalyses the reaction (1S,2R)-1-C-(indol-3-yl)glycerol 3-phosphate + L-serine = D-glyceraldehyde 3-phosphate + L-tryptophan + H2O. Its pathway is amino-acid biosynthesis; L-tryptophan biosynthesis; L-tryptophan from chorismate: step 5/5. In terms of biological role, the alpha subunit is responsible for the aldol cleavage of indoleglycerol phosphate to indole and glyceraldehyde 3-phosphate. This is Tryptophan synthase alpha chain from Sinorhizobium fredii (strain NBRC 101917 / NGR234).